A 56-amino-acid polypeptide reads, in one-letter code: Ribosome biogenesis protein Nop10 (56 aa).

It belongs to the NOP10 family.

Functionally, involved in ribosome biogenesis; more specifically in 18S rRNA pseudouridylation and in cleavage of pre-rRNA. This chain is Ribosome biogenesis protein Nop10, found in Methanococcoides burtonii (strain DSM 6242 / NBRC 107633 / OCM 468 / ACE-M).